Here is a 406-residue protein sequence, read N- to C-terminus: UPF0761 membrane protein NMB0524 (406 aa).

The next 6 membrane-spanning stretches (helical) occupy residues 43–63, 100–120, 139–159, 176–196, 210–230, and 248–268; these read LLALVPVLTVMVAVASIFPVF, LTAIGSVMLVVTSLMLIRTID, FLVYWALLTFGPLSLGVGISF, WSGALRTAATLTFMTLLLWGL, AFVGALATAFCLETARSLFTW, and VPFFLLWLNLLWTLVLGGAVL.

Belongs to the UPF0761 family.

It is found in the cell inner membrane. The chain is UPF0761 membrane protein NMB0524 from Neisseria meningitidis serogroup B (strain ATCC BAA-335 / MC58).